The sequence spans 116 residues: MKYFVVALTLAVAFVCIEECKTVEIGYAVSEDFDQNEIDNDEARQAFKTFTPDWNKIRNDAKRMQDNLEQMKKKFNLNLEEARQAFQTFKPDWNKIRYDAMKMQTSLGQMKKRFNL.

An N-terminal signal peptide occupies residues 1 to 22; the sequence is MKYFVVALTLAVAFVCIEECKT. 2 propeptides span residues 23-44 and 80-83; these read VEIG…DEAR and EEAR. 2 short sequence motifs (processing quadruplet motif) span residues 41 to 44 and 80 to 83; these read DEAR and EEAR. Position 84 is a pyrrolidone carboxylic acid (Q84).

Belongs to the cationic peptide 03 (latarcin) family. 06 subfamily. Post-translationally, cleavage of the propeptide depends on the processing quadruplet motif (XXXR, with at least one of X being E). As to expression, expressed by the venom gland.

It localises to the secreted. Does not have antimicrobial activity against Gram-positive bacteria (A.globiformis VKM Ac-1112 (MIC&gt;70 uM) and B.subtilis VKM B-501 (MIC&gt;70 uM)), Gram-negative bacteria (E.coli DH5-alpha (MIC&gt;70 uM), E.coli MH1 (MIC&gt;70 uM) and P.aeruginosa PAO1 (MIC&gt;70 uM)), yeast (P.pastoris GS115 (MIC&gt;70 uM) or S.cerevisiae Y190 (MIC&gt;70 uM)). Does not have hemolytic activity against rabbit erythrocytes. However, it causes some conductance changes in planar bilayer membranes, without membrane rupture, suggesting a cytolytic function on other biological targets. It causes paralysis, but is not lethal when injected into insect larvae. The chain is M-zodatoxin-Lt6a/c from Lachesana tarabaevi (Spider).